The chain runs to 328 residues: MIVVGIDHGTSGITSCIMENGLIKSIFKIRRTEFEKLSFLDELKKHINLSEIDLIGVCYSMGDGINKITDISRVKNRGVRNLEGIGKKIGGGTKVYDEIKESKIPAVVIPGLHKGIDCMDKRFNALFSHTASPEKISICYNAYKTFNLENFILSDISSNTVTLLIRNGKIFGGFDACIGAVGILHGPIDLELIKKIDLREITANEAFSKAGAVKITDSYKGVEDTKSEIIEKYEKDEKCKLAVDSLVLSVSMEINSLMFLNPENNVVIAGSVGVCKNPDISKMIKENTNGNFFVLDGESGAIGSAMIANDILYGKKDILGISVDFNIE.

The protein belongs to the UPF0285 family.

The sequence is that of UPF0285 protein Mevan_1551 from Methanococcus vannielii (strain ATCC 35089 / DSM 1224 / JCM 13029 / OCM 148 / SB).